We begin with the raw amino-acid sequence, 756 residues long: Phosphate transporter PHO1 homolog 6 (756 aa).

The SPX domain occupies 1-303; that stretch reads MKFGKDFSSE…SRDAAKSYMK (303 aa). Residues 1-355 are Cytoplasmic-facing; the sequence is MKFGKDFSSE…KPKRERHRLT (355 aa). A helical transmembrane segment spans residues 356 to 376; sequence FSTGFLGGCMFSLIVALVAIV. Over 377 to 396 the chain is Extracellular; sequence RTRNILQDDGQKQYMNTMFP. A helical membrane pass occupies residues 397–417; the sequence is LYSLFGFIMLHMTMYAANIYF. The Cytoplasmic portion of the chain corresponds to 418–440; the sequence is WRQYRVNYSFIFGFKQGTELGYK. The helical transmembrane segment at 441–461 threads the bilayer; sequence QVLFVGFSIGALALLCVLANL. At 462–477 the chain is on the extracellular side; the sequence is DMETDPKTKDYQALTE. A helical transmembrane segment spans residues 478-498; it reads LLPLFLLIAMFVVLVVPFNIF. Residues 499–631 are Cytoplasmic-facing; that stretch reads YRSSRFFFLT…DEKDRQIIWR (133 aa). Residues 562 to 756 form the EXS domain; that stretch reads KDSQVFNTFL…SLPFNYEVDH (195 aa). A helical membrane pass occupies residues 632 to 652; the sequence is LLGGITSAMAVVFCTYWDLVY. Residues 653-676 lie on the Extracellular side of the membrane; that stretch reads DWGLLNRTSKNPWLRDNLLIPHKE. The chain crosses the membrane as a helical span at residues 677–697; it reads VYVLAMILNVVLRFAWMQTVL. The Cytoplasmic portion of the chain corresponds to 698 to 756; the sequence is DFKFESIHTQTVVAVVASLEIIRRGIWNFFRLENEHLNNVGKYRAFKAVSLPFNYEVDH.

The protein belongs to the SYG1 (TC 2.A.94) family. Specifically expressed in anther connective tissue.

It is found in the cell membrane. May transport inorganic phosphate (Pi). The polypeptide is Phosphate transporter PHO1 homolog 6 (PHO1-H6) (Arabidopsis thaliana (Mouse-ear cress)).